Reading from the N-terminus, the 783-residue chain is MTAPEKPVKQEEMAALDVDGGGGGGGHGEYLQQQQQQQQQHGNGAAAAAAQDTQPSPLALLAATCSKIGPPSPGDDDEEAAVAAAAGVPAAAAGATGDLASAQLGGAPNRWEVLSATPTTIKDEAGNLVQIPGAATSSGQYVLPLQNLQNQQIFSVAPGSDSSNGTVSNVQYQVIPQIQSTDAQQVQIGFTGSSDNGGINQENSQIQIIPGSNQTLLASGTPPANIQNLIPQTGQVQVQGVAIGGSSFPGQTQVVANVPLGLPGNITFVPINSVDLDSLGLSGSSQTMTAGINADGHLINTGQAMDSSDNSERTGERVSPDVNETNADTDLFVPTSSSSQLPVTIDSTGILQQNTNSLTTTSGQVHSSDLQGNYIQSPVSEETQAQNIQVSTAQPVVQHLQLQDSQQPTSQAQIVQGITPQTIHGVQASGQNISQQALQNLQLQLNPGTFLIQAQTVTPSGQITWQTFQVQGVQNLQNLQIQNTAAQQITLTPVQTLTLGQVAAGGALTSTPVSLSTGQLPNLQTVTVNSIDSTGIQLHPGENADSPADIRIKEEEPDPEEWQLSGDSTLNTNDLTHLRVQVVDEEGDQQHQEGKRLRRVACTCPNCKEGGGRGTNLGKKKQHICHIPGCGKVYGKTSHLRAHLRWHSGERPFICNWMFCGKRFTRSDELQRHRRTHTGEKKFVCPECSKRFMRSDHLAKHIKTHQNKKVIHSSSTVLASVEAGRDDALITAGGTTLILANIQQGSVSGIGTVNTSATSNQDILTNTEIPLQLVTVSGNETME.

Over residues 1 to 12 (MTAPEKPVKQEE) the composition is skewed to basic and acidic residues. Residues 1-55 (MTAPEKPVKQEEMAALDVDGGGGGGGHGEYLQQQQQQQQQHGNGAAAAAAQDTQP) are disordered. Over residues 19–28 (DGGGGGGGHG) the composition is skewed to gly residues. Residues 29-51 (EYLQQQQQQQQQHGNGAAAAAAQ) are compositionally biased toward low complexity. Serine 72 carries the post-translational modification Phosphoserine. A Glycyl lysine isopeptide (Lys-Gly) (interchain with G-Cter in SUMO) cross-link involves residue lysine 122. A transactivation domain (Gln-rich) region spans residues 140–239 (QYVLPLQNLQ…IPQTGQVQVQ (100 aa)). Residues 302–340 (GQAMDSSDNSERTGERVSPDVNETNADTDLFVPTSSSSQ) form a disordered region. Positions 310-319 (NSERTGERVS) are enriched in basic and acidic residues. Polar residues predominate over residues 322-340 (VNETNADTDLFVPTSSSSQ). The segment at 352 to 501 (QQNTNSLTTT…TPVQTLTLGQ (150 aa)) is transactivation domain (Gln-rich). The 9aaTAD signature appears at 463 to 471 (ITWQTFQVQ). The segment at 536-622 (IQLHPGENAD…RGTNLGKKKQ (87 aa)) is repressor domain. Residue lysine 553 is modified to N6-acetyllysine; alternate. Residue lysine 553 forms a Glycyl lysine isopeptide (Lys-Gly) (interchain with G-Cter in SUMO); alternate linkage. Residue lysine 553 forms a Glycyl lysine isopeptide (Lys-Gly) (interchain with G-Cter in SUMO1); alternate linkage. Lysine 553 participates in a covalent cross-link: Glycyl lysine isopeptide (Lys-Gly) (interchain with G-Cter in SUMO2); alternate. 2 positions are modified to phosphoserine: serine 565 and serine 568. Lysine 595 participates in a covalent cross-link: Glycyl lysine isopeptide (Lys-Gly) (interchain with G-Cter in SUMO2). A C2H2-type 1 zinc finger spans residues 623–647 (HICHIPGCGKVYGKTSHLRAHLRWH). At serine 648 the chain carries Phosphoserine. 2 C2H2-type zinc fingers span residues 653-677 (FICN…RRTH) and 683-705 (FVCP…IKTH).

The protein belongs to the Sp1 C2H2-type zinc-finger protein family. In terms of assembly, interacts with HLTF; the interaction may be required for basal transcriptional activity of HLTF. Interacts with HDAC1; the interaction deacetylates SP3 and regulates its transcriptional activity. Interacts with HDAC2 (preferably the CK2-phosphorylated form); the interaction deacetylates SP3 and regulates its transcriptional activity. Ceramides can also regulate acetylation/deacetylation events through altering the interaction of HDAC with SP3. Interacts with MEIS2 isoform Meis2D and PBX1 isoform PBX1a. Post-translationally, acetylated by histone acetyltransferase p300, deacetylated by HDACs. Acetylation/deacetylation states regulate transcriptional activity. Acetylation appears to activate transcription. Alternate sumoylation and acetylation at Lys-553 also control transcriptional activity. Sumoylated on all isoforms. Sumoylated on 2 sites in longer isoforms with Lys-553 being the major site. Sumoylation at this site promotes nuclear localization to the nuclear periphery, nuclear dots and PML nuclear bodies. Sumoylation on Lys-553 represses the transactivation activity, except for the largest isoform which has little effect on transactivation. Alternate sumoylation and acetylation at Lys-553 also control transcriptional activity.

The protein localises to the nucleus. It is found in the PML body. Functionally, transcriptional factor that can act as an activator or repressor depending on isoform and/or post-translational modifications. Binds to GT and GC boxes promoter elements. Competes with SP1 for the GC-box promoters. Weak activator of transcription but can activate a number of genes involved in different processes such as cell-cycle regulation, hormone-induction and house-keeping. The sequence is that of Transcription factor Sp3 (Sp3) from Mus musculus (Mouse).